Here is a 234-residue protein sequence, read N- to C-terminus: Probable cyclic nucleotide phosphodiesterase Rmag_0669 (234 aa).

The Fe cation site is built by aspartate 11, histidine 13, aspartate 49, asparagine 79, histidine 145, histidine 184, and histidine 186. Residues histidine 13, aspartate 49, and 79–80 (NH) contribute to the AMP site. Histidine 186 is a binding site for AMP.

Belongs to the cyclic nucleotide phosphodiesterase class-III family. It depends on Fe(2+) as a cofactor.

The protein is Probable cyclic nucleotide phosphodiesterase Rmag_0669 of Ruthia magnifica subsp. Calyptogena magnifica.